The following is a 436-amino-acid chain: Aminotransferase tdiD (436 aa).

Residues R30, Y86, Y148, and N202 each coordinate substrate. N6-(pyridoxal phosphate)lysine is present on K270. R407 contacts substrate.

It belongs to the class-I pyridoxal-phosphate-dependent aminotransferase family. The cofactor is pyridoxal 5'-phosphate.

The catalysed reaction is 3-phenylpyruvate + L-tryptophan = indole-3-pyruvate + L-phenylalanine. Its pathway is secondary metabolite biosynthesis. Its function is as follows. Aminotransferase; part of the gene cluster that mediates the biosynthesis of terrequinone A, an antitumor agent. The first step in the biosynthetic pathway for terrequinone A is formation of indole pyruvic acid (IPA) from L-tryptophan by the aminotransferase tdiD. The nonribosomal peptide synthase tdiA then immediately converts unstable IPA to didemethylasterriquinone D (DDAQ D), via condensation of 2 IPA molecules. The symmetric connectivity of the 2 IPA molecules is thought to arise by head-to-tail dual Claisen condensations facilitated by the TE domain. TdiB then catalyzes reverse prenylation by transferring dimethylallyl diphosphate to carbon atom 2' of DDAQ D, to yield asterriquinone C-1. Finally, tdiC and tdiE enzymes robustly convert asterriquinone C-1 to terrequinone A via a transformation involving regular prenylation at carbon atom 5, which requires elimination of the hydroxy group on C-5. In Emericella nidulans (strain FGSC A4 / ATCC 38163 / CBS 112.46 / NRRL 194 / M139) (Aspergillus nidulans), this protein is Aminotransferase tdiD.